A 263-amino-acid chain; its full sequence is 4-hydroxy-tetrahydrodipicolinate reductase (263 aa).

NAD(+) contacts are provided by residues 7–12 (GASGRM) and Asp33. Arg34 is an NADP(+) binding site. Residues 96–98 (GTT) and 120–123 (APNM) each bind NAD(+). His153 functions as the Proton donor/acceptor in the catalytic mechanism. His154 provides a ligand contact to (S)-2,3,4,5-tetrahydrodipicolinate. Lys157 serves as the catalytic Proton donor. A (S)-2,3,4,5-tetrahydrodipicolinate-binding site is contributed by 163 to 164 (GT).

This sequence belongs to the DapB family.

The protein resides in the cytoplasm. The catalysed reaction is (S)-2,3,4,5-tetrahydrodipicolinate + NAD(+) + H2O = (2S,4S)-4-hydroxy-2,3,4,5-tetrahydrodipicolinate + NADH + H(+). It carries out the reaction (S)-2,3,4,5-tetrahydrodipicolinate + NADP(+) + H2O = (2S,4S)-4-hydroxy-2,3,4,5-tetrahydrodipicolinate + NADPH + H(+). It functions in the pathway amino-acid biosynthesis; L-lysine biosynthesis via DAP pathway; (S)-tetrahydrodipicolinate from L-aspartate: step 4/4. Functionally, catalyzes the conversion of 4-hydroxy-tetrahydrodipicolinate (HTPA) to tetrahydrodipicolinate. The polypeptide is 4-hydroxy-tetrahydrodipicolinate reductase (Ralstonia pickettii (strain 12J)).